A 150-amino-acid chain; its full sequence is Catabolic 3-dehydroquinase (150 aa).

Tyr-24 serves as the catalytic Proton acceptor. Residues Asn-75, His-81, and Asp-88 each contribute to the substrate site. The active-site Proton donor is the His-101. Substrate is bound by residues 102–103 (IS) and Arg-112.

This sequence belongs to the type-II 3-dehydroquinase family. In terms of assembly, homododecamer. Adopts a ring-like structure, composed of an arrangement of two hexameric rings stacked on top of one another.

It catalyses the reaction 3-dehydroquinate = 3-dehydroshikimate + H2O. It participates in aromatic compound metabolism; 3,4-dihydroxybenzoate biosynthesis; 3,4-dihydroxybenzoate from 3-dehydroquinate: step 1/2. Functionally, is involved in the catabolism of quinate. Allows the utilization of quinate as carbon source via the beta-ketoadipate pathway. The protein is Catabolic 3-dehydroquinase of Verticillium alfalfae (strain VaMs.102 / ATCC MYA-4576 / FGSC 10136) (Verticillium wilt of alfalfa).